The primary structure comprises 231 residues: Demethylmenaquinone methyltransferase (231 aa).

S-adenosyl-L-methionine contacts are provided by residues Thr-62, Asp-80, 102–103 (DA), and Ser-119.

The protein belongs to the class I-like SAM-binding methyltransferase superfamily. MenG/UbiE family.

The catalysed reaction is a 2-demethylmenaquinol + S-adenosyl-L-methionine = a menaquinol + S-adenosyl-L-homocysteine + H(+). Its pathway is quinol/quinone metabolism; menaquinone biosynthesis; menaquinol from 1,4-dihydroxy-2-naphthoate: step 2/2. Functionally, methyltransferase required for the conversion of demethylmenaquinol (DMKH2) to menaquinol (MKH2). The chain is Demethylmenaquinone methyltransferase from Streptomyces avermitilis (strain ATCC 31267 / DSM 46492 / JCM 5070 / NBRC 14893 / NCIMB 12804 / NRRL 8165 / MA-4680).